We begin with the raw amino-acid sequence, 52 residues long: Small ribosomal subunit protein uS14 (52 aa).

The Zn(2+) site is built by Cys-17, Cys-20, Cys-35, and Cys-38.

It belongs to the universal ribosomal protein uS14 family. Zinc-binding uS14 subfamily. In terms of assembly, part of the 30S ribosomal subunit. Zn(2+) is required as a cofactor.

Binds 16S rRNA, required for the assembly of 30S particles. The polypeptide is Small ribosomal subunit protein uS14 (Halobacterium salinarum (strain ATCC 700922 / JCM 11081 / NRC-1) (Halobacterium halobium)).